A 136-amino-acid chain; its full sequence is Transcription antitermination protein NusB (136 aa).

Belongs to the NusB family.

Involved in transcription antitermination. Required for transcription of ribosomal RNA (rRNA) genes. Binds specifically to the boxA antiterminator sequence of the ribosomal RNA (rrn) operons. The polypeptide is Transcription antitermination protein NusB (Paenarthrobacter aurescens (strain TC1)).